We begin with the raw amino-acid sequence, 162 residues long: Retinoic acid receptor responder protein 2 (162 aa).

Positions 1–20 (MWQLLLPLALGLGTMGLGRA) are cleaved as a signal peptide. 3 disulfide bridges follow: cysteine 77/cysteine 87, cysteine 98/cysteine 117, and cysteine 101/cysteine 135. The propeptide occupies 156-162 (FIKALSP).

In terms of processing, secreted in an inactive precursor form, prochemerin, which is proteolytically processed by a variety of extracellular proteases to generate forms with differing levels of bioactivity. For example, the removal of five amino acids results in chemerin-157, which exhibits the highest activity, while removal of six amino acids results in chemerin-156 which has slightly less activity. Some proteases are able to cleave at more than one site and chemerin forms may be sequentially processed by different enzymes to modulate activity levels. The coordinated expression and activity of chemerin-modifying enzymes is essential for regulating its bioactivation, inactivation and, consequently, biological function. Cathepsin G cleaves six C-terminal amino acids from prochemerin (chemerin-156), elastase is able to cleave five (chemerin-157), seven (chemerin-155) or ten (chemerin-152), plasmin cleaves four amino acids (chemerin-158), and tryptase cleaves four (chemerin-158) or seven (chemerin-155). Multiple cleavages might be required to fully activate chemerin, with an initial tryptase cleavage resulting in chemerin with low activity (chemerin-158), and a second cleavage by carboxypeptidase N or B producing highly active chemerin (chemerin-157).

The protein resides in the secreted. Functionally, adipocyte-secreted protein (adipokine) that regulates adipogenesis, metabolism and inflammation through activation of the chemokine-like receptor 1 (CMKLR1). Also acts as a ligand for CMKLR2. Can also bind to C-C chemokine receptor-like 2 (CCRL2), but with a lower affinity than it does to CMKLR1 or CMKLR2. Positively regulates adipocyte differentiation, modulates the expression of adipocyte genes involved in lipid and glucose metabolism and might play a role in angiogenesis, a process essential for the expansion of white adipose tissue. Also acts as a pro-inflammatory adipokine, causing an increase in secretion of pro-inflammatory and prodiabetic adipokines, which further impair adipose tissue metabolic function and have negative systemic effects including impaired insulin sensitivity, altered glucose and lipid metabolism, and a decrease in vascular function in other tissues. Can have both pro- and anti-inflammatory properties depending on the modality of enzymatic cleavage by different classes of proteases. Acts as a chemotactic factor for leukocyte populations expressing CMKLR1, particularly immature plasmacytoid dendritic cells, but also immature myeloid DCs, macrophages and natural killer cells. Exerts an anti-inflammatory role by preventing TNF/TNFA-induced VCAM1 expression and monocytes adhesion in vascular endothelial cells. The effect is mediated via inhibiting activation of NF-kappa-B and CRK/p38 through stimulation of AKT1/NOS3 signaling and nitric oxide production. Exhibits an antimicrobial function in the skin. This Bos taurus (Bovine) protein is Retinoic acid receptor responder protein 2 (RARRES2).